A 250-amino-acid polypeptide reads, in one-letter code: Probable syntaxin-8B (250 aa).

The Cytoplasmic portion of the chain corresponds to 1–213 (MGDYWLNEHD…NRRMETIKQN (213 aa)). Positions 73-100 (EKELLRRKNKVESLISMKNQLNSTLDAA) form a coiled coil. One can recognise a t-SNARE coiled-coil homology domain in the interval 148-210 (QHIMREQDES…RNANRRMETI (63 aa)). The helical; Anchor for type IV membrane protein transmembrane segment at 214–234 (AGSTCMIVCIVILIILIVVLI) threads the bilayer. Residues 235-250 (ATDSGCKIYNDPKHCP) are Vesicular-facing.

The protein belongs to the syntaxin family.

It is found in the membrane. The sequence is that of Probable syntaxin-8B (syn8B) from Dictyostelium discoideum (Social amoeba).